A 315-amino-acid polypeptide reads, in one-letter code: Ferrochelatase (315 aa).

Residues histidine 193 and glutamate 273 each contribute to the Fe cation site.

It belongs to the ferrochelatase family.

The protein localises to the cytoplasm. It catalyses the reaction heme b + 2 H(+) = protoporphyrin IX + Fe(2+). Its pathway is porphyrin-containing compound metabolism; protoheme biosynthesis; protoheme from protoporphyrin-IX: step 1/1. Catalyzes the ferrous insertion into protoporphyrin IX. The chain is Ferrochelatase from Wolbachia sp. subsp. Drosophila simulans (strain wRi).